The sequence spans 395 residues: Probable alcohol dehydrogenase EutG (395 aa).

Residues D57, 116–120, 156–160, K178, and 197–201 each bind NAD(+); these read GSVLD, TTAGT, and VTEGV. Residues D212, H216, H281, and H295 each contribute to the Fe cation site. 2 residues coordinate NAD(+): H295 and D354.

Belongs to the iron-containing alcohol dehydrogenase family. Fe cation serves as cofactor.

The protein resides in the bacterial microcompartment. The catalysed reaction is ethanol + NAD(+) = acetaldehyde + NADH + H(+). Its pathway is amine and polyamine degradation; ethanolamine degradation. Its function is as follows. Probably acts on the acetaldehyde produced by the degradation of ethanolamine, producing ethanol. Expression of the eut operon allows this bacteria to use ethanolamine (EA) as a carbon, nitrogen and energy source. It relies on cobalamin (vitamin B12) both as a cofactor for the ethanolamine ammonia-lyase (EAL) activity and to induce the operon. EA enhances bacterial survival in macrophages in a concentration-dependent manner, suggesting it is an important nutrient during infection. This chain is Probable alcohol dehydrogenase EutG, found in Salmonella typhimurium (strain LT2 / SGSC1412 / ATCC 700720).